We begin with the raw amino-acid sequence, 595 residues long: Elongation factor 4 (595 aa).

One can recognise a tr-type G domain in the interval 2–184 (SHIRNFSIIA…RLVATIPAPT (183 aa)). GTP contacts are provided by residues 14–19 (DHGKST) and 131–134 (NKMD).

This sequence belongs to the TRAFAC class translation factor GTPase superfamily. Classic translation factor GTPase family. LepA subfamily.

It localises to the cell inner membrane. The catalysed reaction is GTP + H2O = GDP + phosphate + H(+). Its function is as follows. Required for accurate and efficient protein synthesis under certain stress conditions. May act as a fidelity factor of the translation reaction, by catalyzing a one-codon backward translocation of tRNAs on improperly translocated ribosomes. Back-translocation proceeds from a post-translocation (POST) complex to a pre-translocation (PRE) complex, thus giving elongation factor G a second chance to translocate the tRNAs correctly. Binds to ribosomes in a GTP-dependent manner. The sequence is that of Elongation factor 4 from Pseudomonas savastanoi pv. phaseolicola (strain 1448A / Race 6) (Pseudomonas syringae pv. phaseolicola (strain 1448A / Race 6)).